Reading from the N-terminus, the 1011-residue chain is MSNPFAFRSAQVTFWTTVVYLALLVPLVVINEGVPPVQPDGSLFLDRGLNLTEAWLDLGHITERFHHQNSRENDVVRDYLRLRIEQIIAANDAEARTTVFNDLTSNVTYLAWGSAVPTHYQGNNLYVYIRGKDDDQGEWWHNARAGKLIGKGGVLVNAHFDSVSTAYGATDDGMGTVTVLQMIRYFTKPGNQPQRGIVALLNNAEEPGLLGAAAFGKSPLLPFIHTFLNLEGAGAGSRCVLFRSTDREVTSAFSNVQSPFGSVVGSDGFKMGLVRSGTDYSVWHDIYGQRGLDLAFYRPRALYHTNQDDTKHTSRESLWQMMAASTTTLINLSADTGSDYIGDRPDGDRSKAPNGSPSDGVWFDLFGSTFVLFGLRGMFAWSLTVLIVGPLTLFGMMYLVHKQGKGYAFHTKLRATSDSSSEDGDDEDGEVIRLGGWKGFFRFPFALIVAGALVTGAALLLRKMNPFIIYSSEYAVWAMMISLFYFGFWLIMRGSSYTRPSALHRLYVHIWLFILGWVALVFATVLEDRMRIASGYIFVFWESQVFLATLVAVCELFSLPRKIDFARGAAEEAEVRDHLEAVPHSDAVIAPSLEEATSPQRAGQSSNSPQEDDEDDVPDEETPLFRKAGRGNKLDTSFLRRGYRRSVSAIMDSNNEAEDGPKRKQPFEGEQAWSGPMVTSTWILQFLLLGPFMVILGGQVGLLLTSAVNQTGVDGSSLLAPYLMIAALSAILLMPLSPFIHRVTKHVPLFLLAVAFATLIYSLVAFPFSPRAPYKTFFRQTVDLDTGDTQVHLAGVEQYLRKIIADVPSALGQEIACDASSSRRDLVDCTYDAAQVPPIPTYGSGKKSFDLPPGVSPGPAYYGKLLTVTVVNTTAKIATQGSKTARLKIDAVDTRVVELRFSKEGPPIRSFRVVGADSWDDRFGAFPDDGARVLRLWRRDWESSFVVDITWKVDGGNTRGLEGRAVALWSDANDAVNTMPAFREVVRYAPAWATVSKAAPGLVEGSKAFKV.

The Cytoplasmic portion of the chain corresponds to 1 to 9; the sequence is MSNPFAFRS. Residues 10–30 traverse the membrane as a helical segment; it reads AQVTFWTTVVYLALLVPLVVI. Residues 31-378 lie on the Vacuolar side of the membrane; the sequence is NEGVPPVQPD…TFVLFGLRGM (348 aa). 2 N-linked (GlcNAc...) asparagine glycosylation sites follow: asparagine 50 and asparagine 106. Zn(2+) contacts are provided by histidine 159 and aspartate 171. The active-site Proton acceptor is glutamate 205. Zn(2+) is bound by residues glutamate 206, glutamate 231, and histidine 304. The N-linked (GlcNAc...) asparagine glycan is linked to asparagine 331. Residues 379–399 traverse the membrane as a helical segment; sequence FAWSLTVLIVGPLTLFGMMYL. At 400–439 the chain is on the cytoplasmic side; the sequence is VHKQGKGYAFHTKLRATSDSSSEDGDDEDGEVIRLGGWKG. A helical membrane pass occupies residues 440–460; sequence FFRFPFALIVAGALVTGAALL. Over 461–471 the chain is Vacuolar; sequence LRKMNPFIIYS. The helical transmembrane segment at 472–492 threads the bilayer; it reads SEYAVWAMMISLFYFGFWLIM. The Cytoplasmic portion of the chain corresponds to 493-505; the sequence is RGSSYTRPSALHR. Residues 506 to 526 form a helical membrane-spanning segment; sequence LYVHIWLFILGWVALVFATVL. The Vacuolar segment spans residues 527-536; it reads EDRMRIASGY. Residues 537–557 form a helical membrane-spanning segment; it reads IFVFWESQVFLATLVAVCELF. Residues 558 to 682 lie on the Cytoplasmic side of the membrane; sequence SLPRKIDFAR…WSGPMVTSTW (125 aa). Residues 595 to 609 are compositionally biased toward polar residues; sequence EATSPQRAGQSSNSP. Disordered regions lie at residues 595–627 and 650–671; these read EATS…LFRK and IMDS…EGEQ. The segment covering 610-622 has biased composition (acidic residues); sequence QEDDEDDVPDEET. A helical transmembrane segment spans residues 683–703; that stretch reads ILQFLLLGPFMVILGGQVGLL. Residues 704–719 are Vacuolar-facing; it reads LTSAVNQTGVDGSSLL. Asparagine 709 carries an N-linked (GlcNAc...) asparagine glycan. Residues 720 to 740 traverse the membrane as a helical segment; it reads APYLMIAALSAILLMPLSPFI. The Cytoplasmic portion of the chain corresponds to 741–747; sequence HRVTKHV. Residues 748 to 768 traverse the membrane as a helical segment; sequence PLFLLAVAFATLIYSLVAFPF. Residues 769–1011 lie on the Vacuolar side of the membrane; sequence SPRAPYKTFF…LVEGSKAFKV (243 aa). The N-linked (GlcNAc...) asparagine glycan is linked to asparagine 872.

This sequence belongs to the peptidase M28 family. Zn(2+) serves as cofactor.

Its subcellular location is the vacuole membrane. Its function is as follows. May be involved in vacuolar sorting and osmoregulation. This is Vacuolar membrane protease from Pyricularia oryzae (strain 70-15 / ATCC MYA-4617 / FGSC 8958) (Rice blast fungus).